Here is a 522-residue protein sequence, read N- to C-terminus: Na(+)/H(+) antiporter NhaB (522 aa).

Helical transmembrane passes span 25–45 (VFLVINPFIFWFHPFIAGWLL), 49–69 (FIFTLAMALKCYPLQPGGMLA), 87–107 (ILANFEVILLLMFMVAGIYFM), 128–162 (LSLAFCLTAAFLSAFLDALTVIAVIISVAMGFYGV), 201–221 (LMMHAAVGTALGGVMTLVGEP), 237–257 (FFFRMSPVTLLTLISGVVTCI), 302–322 (VFVGIWLIIGLAFHLASVGLI), 356–376 (LVVFFSVVAVIIDQHLFAPVI), 388–408 (LLLFYIFNGVLSAISDNVFVA), 446–466 (ATPNGQAAFLFLLTSSISPLI), and 476–496 (MALPYTIVLSIVGLLAVEYVL).

This sequence belongs to the NhaB Na(+)/H(+) (TC 2.A.34) antiporter family.

The protein localises to the cell inner membrane. It catalyses the reaction 2 Na(+)(in) + 3 H(+)(out) = 2 Na(+)(out) + 3 H(+)(in). Functionally, na(+)/H(+) antiporter that extrudes sodium in exchange for external protons. The polypeptide is Na(+)/H(+) antiporter NhaB (Actinobacillus succinogenes (strain ATCC 55618 / DSM 22257 / CCUG 43843 / 130Z)).